Here is a 556-residue protein sequence, read N- to C-terminus: Formate--tetrahydrofolate ligase 1 (556 aa).

Residue 65–72 participates in ATP binding; it reads TPAGEGKT.

The protein belongs to the formate--tetrahydrofolate ligase family.

It catalyses the reaction (6S)-5,6,7,8-tetrahydrofolate + formate + ATP = (6R)-10-formyltetrahydrofolate + ADP + phosphate. The protein operates within one-carbon metabolism; tetrahydrofolate interconversion. This is Formate--tetrahydrofolate ligase 1 from Desulfitobacterium hafniense (strain Y51).